A 529-amino-acid chain; its full sequence is Lysine--tRNA ligase (529 aa).

A 'HIGH' region motif is present at residues 44 to 52 (PSGLPHIGT). The 'KMSKS' region signature appears at 290-294 (KISKS). Residue Lys293 coordinates ATP.

This sequence belongs to the class-I aminoacyl-tRNA synthetase family.

The protein localises to the cytoplasm. The catalysed reaction is tRNA(Lys) + L-lysine + ATP = L-lysyl-tRNA(Lys) + AMP + diphosphate. This chain is Lysine--tRNA ligase, found in Rickettsia akari (strain Hartford).